We begin with the raw amino-acid sequence, 290 residues long: Ribosome-inactivating protein bryodin I (290 aa).

A signal peptide spans 1 to 23 (MIKLLVLWLLILTIFLKSPTVEG). Residues E183 and E212 contribute to the active site. N-linked (GlcNAc...) asparagine glycosylation is found at N214 and N250. Residues 271-290 (AIGEDISMTLIGFEHGLYGI) constitute a propeptide, removed in mature form.

The protein belongs to the ribosome-inactivating protein family. Type 1 RIP subfamily. Post-translationally, appears to undergo proteolytic cleavage in the C-terminal to produce a shorter protein.

The enzyme catalyses Endohydrolysis of the N-glycosidic bond at one specific adenosine on the 28S rRNA.. Its function is as follows. Ribosome-inactivating protein of type 1, inhibits protein synthesis in animal cells. The protein is Ribosome-inactivating protein bryodin I of Bryonia dioica (Red bryony).